Here is a 274-residue protein sequence, read N- to C-terminus: Putative phosphoenolpyruvate synthase regulatory protein (274 aa).

ADP is bound at residue 155-162 (GVSRSGKT).

It belongs to the pyruvate, phosphate/water dikinase regulatory protein family. PSRP subfamily.

The catalysed reaction is [pyruvate, water dikinase] + ADP = [pyruvate, water dikinase]-phosphate + AMP + H(+). The enzyme catalyses [pyruvate, water dikinase]-phosphate + phosphate + H(+) = [pyruvate, water dikinase] + diphosphate. In terms of biological role, bifunctional serine/threonine kinase and phosphorylase involved in the regulation of the phosphoenolpyruvate synthase (PEPS) by catalyzing its phosphorylation/dephosphorylation. The polypeptide is Putative phosphoenolpyruvate synthase regulatory protein (Laribacter hongkongensis (strain HLHK9)).